We begin with the raw amino-acid sequence, 136 residues long: ATP synthase epsilon chain (136 aa).

The protein belongs to the ATPase epsilon chain family. In terms of assembly, F-type ATPases have 2 components, CF(1) - the catalytic core - and CF(0) - the membrane proton channel. CF(1) has five subunits: alpha(3), beta(3), gamma(1), delta(1), epsilon(1). CF(0) has three main subunits: a, b and c.

The protein localises to the cell membrane. Produces ATP from ADP in the presence of a proton gradient across the membrane. The sequence is that of ATP synthase epsilon chain from Ureaplasma urealyticum serovar 10 (strain ATCC 33699 / Western).